Consider the following 221-residue polypeptide: Interleukin-12 subunit alpha (221 aa).

Residues 1–25 (MCPLRSLLLLSTLVLLHHLPHLSLG) form the signal peptide. 3 disulfides stabilise this stretch: cysteine 39-cysteine 112, cysteine 66-cysteine 198, and cysteine 87-cysteine 125. N-linked (GlcNAc...) asparagine glycosylation is found at asparagine 41 and asparagine 95.

The protein belongs to the IL-6 superfamily. As to quaternary structure, heterodimer with IL12B; disulfide-linked. This heterodimer is known as interleukin IL-12. Heterodimer with EBI3/IL27B; not disulfide-linked. This heterodimer is known as interleukin IL-35. Interacts with NBR1; this interaction promotes IL-12 secretion.

Its subcellular location is the secreted. Heterodimerizes with IL12B to form the IL-12 cytokine or with EBI3/IL27B to form the IL-35 cytokine. IL-12 is primarily produced by professional antigen-presenting cells (APCs) such as B-cells and dendritic cells (DCs) as well as macrophages and granulocytes and regulates T-cell and natural killer-cell responses, induces the production of interferon-gamma (IFN-gamma), favors the differentiation of T-helper 1 (Th1) cells and is an important link between innate resistance and adaptive immunity. Mechanistically, exerts its biological effects through a receptor composed of IL12R1 and IL12R2 subunits. Binding to the receptor results in the rapid tyrosine phosphorylation of a number of cellular substrates including the JAK family kinases TYK2 and JAK2. In turn, recruited STAT4 gets phosphorylated and translocates to the nucleus where it regulates cytokine/growth factor responsive genes. As part of IL-35, plays essential roles in maintaining the immune homeostasis of the liver microenvironment and also functions as an immune-suppressive cytokine. Mediates biological events through unconventional receptors composed of IL12RB2 and gp130/IL6ST heterodimers or homodimers. Signaling requires the transcription factors STAT1 and STAT4, which form a unique heterodimer that binds to distinct DNA sites. The chain is Interleukin-12 subunit alpha (IL12A) from Cervus elaphus (Red deer).